The sequence spans 329 residues: Mas-related G-protein coupled receptor member X2 (329 aa).

The Extracellular segment spans residues 1-33 (MDPTTPAWGTESTTMNGNDQALPLFCGKETLIS). A helical membrane pass occupies residues 34 to 54 (VFLILFIALVGLVGNGFVLWL). Topologically, residues 55–63 (LGFRMRKNA) are cytoplasmic. A helical membrane pass occupies residues 64–84 (FSVYVLSLAGADFLFLCFQII). Residues 85–96 (NCLVYLSNVFCS) are Extracellular-facing. The chain crosses the membrane as a helical span at residues 97-117 (ISINFPSFFITVMTCAYLAGL). The Cytoplasmic portion of the chain corresponds to 118–144 (SMLSTISTERCLSVLWPIWYRCRRPRH). A helical membrane pass occupies residues 145–165 (LSAVACVLLWALSLLLSILEG). Topologically, residues 166-183 (KFCGLFGDGDSGWCQTFD) are extracellular. Residues 184 to 204 (LITAAWLIFLFMVLCGSSLAL) traverse the membrane as a helical segment. At 205–227 (LVRILCGSRGLPLTRLYLTILLT) the chain is on the cytoplasmic side. A helical transmembrane segment spans residues 228-248 (VLVFLLCGLPFGIQWFLILWI). Residues 249-263 (WKNSDVLFCHIHPVS) are Extracellular-facing. A helical membrane pass occupies residues 264–284 (VVLSSLNSSANPIIYFFVGSF). At 285–329 (RKQWRLQQPILKLALQRALQDIAEVDHSEGCFRQGTPEMSRSSLV) the chain is on the cytoplasmic side.

The protein belongs to the G-protein coupled receptor 1 family. Mas subfamily.

Its subcellular location is the cell membrane. Functionally, mast cell-specific receptor for basic secretagogues, i.e. cationic amphiphilic drugs, as well as endo- or exogenous peptides, consisting of a basic head group and a hydrophobic core. Recognizes and binds small molecules containing a cyclized tetrahydroisoquinoline (THIQ), such as non-steroidal neuromuscular blocking drugs (NMBDs), including tubocurarine and atracurium. In response to these compounds, mediates pseudo-allergic reactions characterized by histamine release, inflammation and airway contraction. The sequence is that of Mas-related G-protein coupled receptor member X2 (MRGPRX2) from Pan troglodytes (Chimpanzee).